The chain runs to 652 residues: Phosphomethylpyrimidine synthase (652 aa).

Substrate-binding positions include Asn-257, Met-286, Tyr-315, His-351, 371-373 (SRG), 412-415 (DGLR), and Glu-451. His-455 lines the Zn(2+) pocket. Position 478 (Tyr-478) interacts with substrate. His-519 lines the Zn(2+) pocket. 3 residues coordinate [4Fe-4S] cluster: Cys-599, Cys-602, and Cys-607.

This sequence belongs to the ThiC family. In terms of assembly, homodimer. [4Fe-4S] cluster serves as cofactor.

It catalyses the reaction 5-amino-1-(5-phospho-beta-D-ribosyl)imidazole + S-adenosyl-L-methionine = 4-amino-2-methyl-5-(phosphooxymethyl)pyrimidine + CO + 5'-deoxyadenosine + formate + L-methionine + 3 H(+). Its pathway is cofactor biosynthesis; thiamine diphosphate biosynthesis. Functionally, catalyzes the synthesis of the hydroxymethylpyrimidine phosphate (HMP-P) moiety of thiamine from aminoimidazole ribotide (AIR) in a radical S-adenosyl-L-methionine (SAM)-dependent reaction. This chain is Phosphomethylpyrimidine synthase, found in Thiobacillus denitrificans (strain ATCC 25259 / T1).